The following is a 192-amino-acid chain: Peptide deformylase (192 aa).

2 residues coordinate Fe cation: Cys108 and His150. Glu151 is an active-site residue. His154 provides a ligand contact to Fe cation.

This sequence belongs to the polypeptide deformylase family. Fe(2+) serves as cofactor.

The enzyme catalyses N-terminal N-formyl-L-methionyl-[peptide] + H2O = N-terminal L-methionyl-[peptide] + formate. In terms of biological role, removes the formyl group from the N-terminal Met of newly synthesized proteins. Requires at least a dipeptide for an efficient rate of reaction. N-terminal L-methionine is a prerequisite for activity but the enzyme has broad specificity at other positions. The sequence is that of Peptide deformylase from Opitutus terrae (strain DSM 11246 / JCM 15787 / PB90-1).